The sequence spans 378 residues: Anhydro-N-acetylmuramic acid kinase (378 aa).

ATP is bound at residue 9–16 (GTSADGID).

Belongs to the anhydro-N-acetylmuramic acid kinase family.

It catalyses the reaction 1,6-anhydro-N-acetyl-beta-muramate + ATP + H2O = N-acetyl-D-muramate 6-phosphate + ADP + H(+). It functions in the pathway amino-sugar metabolism; 1,6-anhydro-N-acetylmuramate degradation. Its pathway is cell wall biogenesis; peptidoglycan recycling. In terms of biological role, catalyzes the specific phosphorylation of 1,6-anhydro-N-acetylmuramic acid (anhMurNAc) with the simultaneous cleavage of the 1,6-anhydro ring, generating MurNAc-6-P. Is required for the utilization of anhMurNAc either imported from the medium or derived from its own cell wall murein, and thus plays a role in cell wall recycling. In Prochlorococcus marinus (strain NATL1A), this protein is Anhydro-N-acetylmuramic acid kinase.